A 346-amino-acid chain; its full sequence is Leucine zipper protein 2 (346 aa).

The signal sequence occupies residues 1–17; that stretch reads MKFIGAVYLLFLLPALS. Asparagine 19 and asparagine 131 each carry an N-linked (GlcNAc...) asparagine glycan. Positions 41–209 form a coiled coil; the sequence is RHLSKTSKEL…QLKALKDTVH (169 aa). The segment at 162-190 is leucine-zipper; that stretch reads LRYGKKDLIFKGQQLMDLENKLKVAKDEL. N-linked (GlcNAc...) asparagine glycans are attached at residues asparagine 241 and asparagine 296. The disordered stretch occupies residues 271–346; sequence SAVMRRESTG…LKKTQSDKHN (76 aa). Over residues 293–324 the composition is skewed to polar residues; that stretch reads CSHNQTESSSVMKKTFGHSQSKTPEQNGQGQA. A compositionally biased stretch (basic and acidic residues) spans 326–346; that stretch reads TAEESVKTDGELKKTQSDKHN.

The protein resides in the secreted. This chain is Leucine zipper protein 2 (luzp2), found in Danio rerio (Zebrafish).